The sequence spans 201 residues: Alanine--tRNA ligase (201 aa).

The protein belongs to the class-II aminoacyl-tRNA synthetase family. Zn(2+) is required as a cofactor.

It localises to the cytoplasm. It carries out the reaction tRNA(Ala) + L-alanine + ATP = L-alanyl-tRNA(Ala) + AMP + diphosphate. Its function is as follows. Catalyzes the attachment of alanine to tRNA(Ala) in a two-step reaction: alanine is first activated by ATP to form Ala-AMP and then transferred to the acceptor end of tRNA(Ala). Also edits incorrectly charged Ser-tRNA(Ala) and Gly-tRNA(Ala) via its editing domain. This Rhizobium leguminosarum bv. viciae protein is Alanine--tRNA ligase (alaS).